A 139-amino-acid polypeptide reads, in one-letter code: MMARLWKTTWFLLAILVALVAFSYQVKRKTFIRVEEVNALESSVKETLEYVTEEYNKKSEDLYNFRILRILKIEKQMTNHMEFHITVEMQRTTCLKTEKNLCNVQEGELHKQIQCYFSVYVIPWLEVFKMLKKNCTNSS.

The first 28 residues, 1 to 28 (MMARLWKTTWFLLAILVALVAFSYQVKR), serve as a signal peptide directing secretion. Cystine bridges form between C94–C102 and C115–C135. An N-linked (GlcNAc...) asparagine glycan is attached at N134.

The protein belongs to the cystatin family.

It localises to the secreted. Has antibacterial activity against the Gram-negative bacteria E.coli. May play a role in sperm maturation and fertilization. The sequence is that of Cystatin-11 (Cst11) from Rattus norvegicus (Rat).